Reading from the N-terminus, the 267-residue chain is PF03932 family protein CutC (267 aa).

It belongs to the CutC family.

Its subcellular location is the cytoplasm. The protein is PF03932 family protein CutC of Xylella fastidiosa (strain 9a5c).